Reading from the N-terminus, the 274-residue chain is Large ribosomal subunit protein uL2 (274 aa).

2 disordered regions span residues 28–54 and 224–274; these read APHA…TRHI and VAMN…RRRK. Residues 263 to 274 are compositionally biased toward basic and acidic residues; the sequence is KRTDKMIVRRRK.

This sequence belongs to the universal ribosomal protein uL2 family. In terms of assembly, part of the 50S ribosomal subunit. Forms a bridge to the 30S subunit in the 70S ribosome.

Functionally, one of the primary rRNA binding proteins. Required for association of the 30S and 50S subunits to form the 70S ribosome, for tRNA binding and peptide bond formation. It has been suggested to have peptidyltransferase activity; this is somewhat controversial. Makes several contacts with the 16S rRNA in the 70S ribosome. The polypeptide is Large ribosomal subunit protein uL2 (Pseudomonas savastanoi pv. phaseolicola (strain 1448A / Race 6) (Pseudomonas syringae pv. phaseolicola (strain 1448A / Race 6))).